The following is a 446-amino-acid chain: Adenylosuccinate synthetase (446 aa).

GTP-binding positions include 20 to 26 and 48 to 50; these read GDEGKGK and GHT. The active-site Proton acceptor is the aspartate 21. Positions 21 and 48 each coordinate Mg(2+). IMP is bound by residues 21-24, 46-49, threonine 137, arginine 151, glutamine 232, threonine 247, and arginine 319; these read DEGK and NAGH. Histidine 49 (proton donor) is an active-site residue. 315-321 serves as a coordination point for substrate; that stretch reads SVTGRPR. GTP contacts are provided by residues arginine 321, 347 to 349, and 429 to 431; these read KLD and STG.

It belongs to the adenylosuccinate synthetase family. In terms of assembly, homodimer. Requires Mg(2+) as cofactor.

It is found in the cytoplasm. The enzyme catalyses IMP + L-aspartate + GTP = N(6)-(1,2-dicarboxyethyl)-AMP + GDP + phosphate + 2 H(+). It participates in purine metabolism; AMP biosynthesis via de novo pathway; AMP from IMP: step 1/2. Plays an important role in the de novo pathway of purine nucleotide biosynthesis. Catalyzes the first committed step in the biosynthesis of AMP from IMP. This chain is Adenylosuccinate synthetase, found in Ralstonia nicotianae (strain ATCC BAA-1114 / GMI1000) (Ralstonia solanacearum).